The sequence spans 773 residues: Circadian clock protein PASD1 (773 aa).

The PAS domain maps to 30 to 102 (YDYFNQVTLQ…IILKFPLLNS (73 aa)). Positions 313 to 361 (SVDQEGPMDQQDPENPVAPLDQAGLMDPVDPEDSVDLGAAGASAQPLQP) are disordered. The necessary for transcriptional repression stretch occupies residues 365 to 412 (VAYDIISQELELMKKLKEQLEERTWLLHDAIQNQQNALELMMDHLQKQ). Positions 365 to 412 (VAYDIISQELELMKKLKEQLEERTWLLHDAIQNQQNALELMMDHLQKQ) form a coiled coil. Disordered regions lie at residues 427 to 448 (SEAV…PLPH), 506 to 569 (QRKV…QLQE), and 732 to 773 (GVEG…NKPC). The stretch at 475–553 (VAFNQQQLVQ…QERKKWQGQM (79 aa)) forms a coiled coil. Positions 506–536 (QRKVQKQKKMQEKKKLQEQKMQEKKKLQEQR) are enriched in basic and acidic residues.

Interacts with the CLOCK-BMAL1 heterodimer; this interaction inhibits CLOCK-BMAL1 transcriptional activation and suppress circadian timekeeping. Interacts with BMAL1. Testis-specific. Expressed in a broad range of cancer cells, including melanoma, lung cancer, and breast cancer (at protein level). Testis-specific. Found in histologically normal tissues from patients with uterus, lung and small intestine cancers. Widespread expression seen in solid tumors and diffuse large B-cell lymphoma (DLBCL)-derived cell lines. Isoform 2 is expressed in all DLBCL-derived cell lines, while isoform 1 is preferentially expressed in cell lines derived from non-germinal center DLBCL.

The protein localises to the nucleus. Its function is as follows. Functions as a suppressor of the biological clock that drives the daily circadian rhythms of cells throughout the body. Acts as a nuclear repressor of the CLOCK-BMAL1 heterodimer-mediated transcriptional activation of the core clock components. Inhibits circadian clock function in cancer cells, when overexpressed. In Homo sapiens (Human), this protein is Circadian clock protein PASD1.